The chain runs to 391 residues: Putative gustatory receptor 36a (391 aa).

The Cytoplasmic segment spans residues 1 to 3; that stretch reads MFD. The helical transmembrane segment at 4-24 threads the bilayer; sequence WVGLLLKVLYYYGQIIGLINF. Residues 25–38 are Extracellular-facing; it reads EIDWQRGRVVAAQR. The chain crosses the membrane as a helical span at residues 39–59; sequence GILFAIAINVLICMVLLLQIS. The Cytoplasmic portion of the chain corresponds to 60–73; sequence KKFNLDVYFGRANQ. The helical transmembrane segment at 74-94 threads the bilayer; the sequence is LHQYVIIVMVSLRMASGISAI. Residues 95 to 126 are Extracellular-facing; sequence LNRWRQRAQLMRLVECVLRLFLKKPHVKQMSR. Residues 127–147 traverse the membrane as a helical segment; sequence WAILVKFSVGVVSNFLQMAIS. Topologically, residues 148–165 are cytoplasmic; it reads MESLDRLGFNEFVGMASD. Residues 166 to 186 form a helical membrane-spanning segment; that stretch reads FWMSAIINMAISQHYLVILFV. The Extracellular portion of the chain corresponds to 187-247; it reads RAYYHLLKTE…LQSIVTQLNQ (61 aa). A helical transmembrane segment spans residues 248–268; the sequence is VFGIQGIMVYGGYYIFSVATT. The Cytoplasmic segment spans residues 269–290; it reads YITYSLAINGIEELHLSVRAAA. Residues 291–311 traverse the membrane as a helical segment; sequence LVFSWFLFYYTSAILNLFVML. Over 312-391 the chain is Extracellular; it reads KLFDDHKEME…FLIQYDMEYF (80 aa).

The protein belongs to the insect chemoreceptor superfamily. Gustatory receptor (GR) family. Gr22e subfamily.

The protein localises to the cell membrane. Functionally, probable gustatory receptor which mediates acceptance or avoidance behavior, depending on its substrates. This is Putative gustatory receptor 36a (Gr36a) from Drosophila melanogaster (Fruit fly).